The following is a 78-amino-acid chain: Large ribosomal subunit protein bL28 (78 aa).

A disordered region spans residues 1-21 (MSKVCQVTGKRPITGHNVSHA).

The protein belongs to the bacterial ribosomal protein bL28 family.

The polypeptide is Large ribosomal subunit protein bL28 (Cellvibrio japonicus (strain Ueda107) (Pseudomonas fluorescens subsp. cellulosa)).